The primary structure comprises 367 residues: Cytochrome b (367 aa).

Transmembrane regions (helical) follow at residues 25 to 45 (FGSM…FLAI), 69 to 90 (WIMQ…YIHI), 105 to 125 (WLSG…GYVL), and 170 to 190 (FFAL…IHII). Positions 75 and 89 each coordinate heme b. Positions 174 and 188 each coordinate heme b. His193 provides a ligand contact to a ubiquinone. Helical transmembrane passes span 218–238 (YKDV…MSFT), 280–300 (LGGT…PFTH), 312–332 (LTQA…WTAT), and 339–358 (FIFI…IINP).

It belongs to the cytochrome b family. In terms of assembly, the cytochrome bc1 complex contains 3 respiratory subunits (MT-CYB, CYC1 and UQCRFS1), 2 core proteins (UQCRC1 and UQCRC2) and probably 6 low-molecular weight proteins. Requires heme b as cofactor.

It is found in the mitochondrion inner membrane. In terms of biological role, component of the ubiquinol-cytochrome c reductase complex (complex III or cytochrome b-c1 complex) that is part of the mitochondrial respiratory chain. The b-c1 complex mediates electron transfer from ubiquinol to cytochrome c. Contributes to the generation of a proton gradient across the mitochondrial membrane that is then used for ATP synthesis. The protein is Cytochrome b (MT-CYB) of Austrelaps superbus (Lowland copperhead snake).